Consider the following 104-residue polypeptide: Guanyl-specific ribonuclease Ap1 (104 aa).

2 cysteine pairs are disulfide-bonded: cysteine 2/cysteine 10 and cysteine 6/cysteine 103. The active site involves histidine 40. The Proton acceptor role is filled by glutamate 58. The active-site Proton donor is histidine 92.

The protein belongs to the ribonuclease N1/T1 family.

It is found in the secreted. It catalyses the reaction [RNA] containing guanosine + H2O = an [RNA fragment]-3'-guanosine-3'-phosphate + a 5'-hydroxy-ribonucleotide-3'-[RNA fragment].. This chain is Guanyl-specific ribonuclease Ap1, found in Aspergillus pallidus.